Consider the following 172-residue polypeptide: Ribosome maturation factor RimM (172 aa).

A PRC barrel domain is found at 95 to 168 (AEGEFYYHQI…RVDVEIMEGL (74 aa)).

The protein belongs to the RimM family. Binds ribosomal protein uS19.

It is found in the cytoplasm. In terms of biological role, an accessory protein needed during the final step in the assembly of 30S ribosomal subunit, possibly for assembly of the head region. Essential for efficient processing of 16S rRNA. May be needed both before and after RbfA during the maturation of 16S rRNA. It has affinity for free ribosomal 30S subunits but not for 70S ribosomes. The sequence is that of Ribosome maturation factor RimM from Streptococcus equi subsp. zooepidemicus (strain MGCS10565).